We begin with the raw amino-acid sequence, 334 residues long: Trans-1,2-dihydrobenzene-1,2-diol dehydrogenase (334 aa).

This sequence belongs to the Gfo/Idh/MocA family. As to quaternary structure, homodimer. As to expression, kidney.

It carries out the reaction (1R,2R)-1,2-dihydrobenzene-1,2-diol + NADP(+) = catechol + NADPH + H(+). It catalyses the reaction D-xylose + NADP(+) = D-xylono-1,5-lactone + NADPH + H(+). The chain is Trans-1,2-dihydrobenzene-1,2-diol dehydrogenase (DHDH) from Macaca fascicularis (Crab-eating macaque).